A 491-amino-acid chain; its full sequence is Glutamate--tRNA ligase (491 aa).

The 'HIGH' region signature appears at 13–23; that stretch reads PSPTGFLHIGN. Zn(2+) is bound by residues C110, C112, C137, and H139. The 'KMSKS' region motif lies at 254–258; sequence KLSKR. An ATP-binding site is contributed by K257.

It belongs to the class-I aminoacyl-tRNA synthetase family. Glutamate--tRNA ligase type 1 subfamily. In terms of assembly, monomer. Zn(2+) is required as a cofactor.

The protein resides in the cytoplasm. It catalyses the reaction tRNA(Glu) + L-glutamate + ATP = L-glutamyl-tRNA(Glu) + AMP + diphosphate. In terms of biological role, catalyzes the attachment of glutamate to tRNA(Glu) in a two-step reaction: glutamate is first activated by ATP to form Glu-AMP and then transferred to the acceptor end of tRNA(Glu). In Listeria innocua serovar 6a (strain ATCC BAA-680 / CLIP 11262), this protein is Glutamate--tRNA ligase.